The chain runs to 447 residues: Trigger factor (447 aa).

Residues 159 to 244 (GDMLLMQVES…VREIKEEKLP (86 aa)) form the PPIase FKBP-type domain.

This sequence belongs to the FKBP-type PPIase family. Tig subfamily.

It is found in the cytoplasm. The enzyme catalyses [protein]-peptidylproline (omega=180) = [protein]-peptidylproline (omega=0). In terms of biological role, involved in protein export. Acts as a chaperone by maintaining the newly synthesized protein in an open conformation. Functions as a peptidyl-prolyl cis-trans isomerase. This Dehalococcoides mccartyi (strain CBDB1) protein is Trigger factor.